Here is a 353-residue protein sequence, read N- to C-terminus: Quinolinate synthase (353 aa).

The iminosuccinate site is built by His47 and Ser68. Position 113 (Cys113) interacts with [4Fe-4S] cluster. Iminosuccinate contacts are provided by residues 139–141 (YAN) and Ser156. Cys200 contacts [4Fe-4S] cluster. Iminosuccinate-binding positions include 226-228 (HPE) and Thr243. Cys297 contributes to the [4Fe-4S] cluster binding site.

The protein belongs to the quinolinate synthase family. Type 1 subfamily. [4Fe-4S] cluster is required as a cofactor.

It localises to the cytoplasm. It catalyses the reaction iminosuccinate + dihydroxyacetone phosphate = quinolinate + phosphate + 2 H2O + H(+). Its pathway is cofactor biosynthesis; NAD(+) biosynthesis; quinolinate from iminoaspartate: step 1/1. Functionally, catalyzes the condensation of iminoaspartate with dihydroxyacetone phosphate to form quinolinate. The polypeptide is Quinolinate synthase (Yersinia pseudotuberculosis serotype O:3 (strain YPIII)).